The primary structure comprises 168 residues: Skp-like protein (168 aa).

A signal peptide spans 1 to 22; that stretch reads MRKFTQFVLITAAIMAAPSAFA.

Belongs to the Skp family.

The protein is Skp-like protein of Pseudomonas aeruginosa (strain ATCC 15692 / DSM 22644 / CIP 104116 / JCM 14847 / LMG 12228 / 1C / PRS 101 / PAO1).